Reading from the N-terminus, the 312-residue chain is Dihydroorotate dehydrogenase B (NAD(+)), catalytic subunit (312 aa).

FMN-binding positions include Ser23 and 47–48 (KA). Residues Lys47 and 71–75 (NAIGL) each bind substrate. Residues Asn102 and Asn130 each contribute to the FMN site. Asn130 provides a ligand contact to substrate. Cys133 (nucleophile) is an active-site residue. Lys168 and Ile194 together coordinate FMN. 195–196 (NT) is a binding site for substrate. Residues Gly220, 246–247 (GG), and 268–269 (GT) each bind FMN.

Belongs to the dihydroorotate dehydrogenase family. Type 1 subfamily. Heterotetramer of 2 PyrK and 2 PyrD type B subunits. FMN serves as cofactor.

The protein localises to the cytoplasm. It carries out the reaction (S)-dihydroorotate + NAD(+) = orotate + NADH + H(+). The protein operates within pyrimidine metabolism; UMP biosynthesis via de novo pathway; orotate from (S)-dihydroorotate (NAD(+) route): step 1/1. In terms of biological role, catalyzes the conversion of dihydroorotate to orotate with NAD(+) as electron acceptor. The protein is Dihydroorotate dehydrogenase B (NAD(+)), catalytic subunit (pyrDB) of Enterococcus faecalis (strain ATCC 47077 / OG1RF).